The chain runs to 95 residues: Co-chaperonin GroES (95 aa).

Belongs to the GroES chaperonin family. As to quaternary structure, heptamer of 7 subunits arranged in a ring. Interacts with the chaperonin GroEL.

It localises to the cytoplasm. Together with the chaperonin GroEL, plays an essential role in assisting protein folding. The GroEL-GroES system forms a nano-cage that allows encapsulation of the non-native substrate proteins and provides a physical environment optimized to promote and accelerate protein folding. GroES binds to the apical surface of the GroEL ring, thereby capping the opening of the GroEL channel. This Desulforapulum autotrophicum (strain ATCC 43914 / DSM 3382 / VKM B-1955 / HRM2) (Desulfobacterium autotrophicum) protein is Co-chaperonin GroES.